Here is a 205-residue protein sequence, read N- to C-terminus: Recombination protein RecR (205 aa).

The C4-type zinc-finger motif lies at 59-74 (CARCNTFCEGGLCDIC). One can recognise a Toprim domain in the interval 82–177 (RRLMVVHMPA…KVSRLSQGIP (96 aa)).

This sequence belongs to the RecR family.

May play a role in DNA repair. It seems to be involved in an RecBC-independent recombinational process of DNA repair. It may act with RecF and RecO. The polypeptide is Recombination protein RecR (Neisseria meningitidis serogroup A / serotype 4A (strain DSM 15465 / Z2491)).